The sequence spans 310 residues: Probable cell division protein WhiA (310 aa).

Positions 277–310 (SLKELAEQVPDGPISKSGVNHRLKKLHEIAENLR) form a DNA-binding region, H-T-H motif.

This sequence belongs to the WhiA family.

Functionally, involved in cell division and chromosome segregation. The polypeptide is Probable cell division protein WhiA (Lactobacillus delbrueckii subsp. bulgaricus (strain ATCC 11842 / DSM 20081 / BCRC 10696 / JCM 1002 / NBRC 13953 / NCIMB 11778 / NCTC 12712 / WDCM 00102 / Lb 14)).